The sequence spans 489 residues: Serine/arginine-rich splicing factor 4 (489 aa).

The RRM 1 domain maps to 2 to 72 (PRVYIGRLSY…ERVIVEHARG (71 aa)). Disordered stretches follow at residues 72-95 (GPRRDGSYGSGRSGYGYRRSGRDK) and 169-489 (KIRL…HSRS). Residues S78 and S84 each carry the phosphoserine modification. The RRM 2 domain maps to 104-177 (YRLIVENLSS…RKIRLVEDKP (74 aa)). Basic residues-rich tracts occupy residues 179 to 206 (SRRRRSYSRSRSHSRSRSRSRHSRKSRS) and 214 to 246 (SHSKSRSRSRSGSHSRSKSRSRSQSRSRSKKEK). Over residues 247–279 (SRSPSKDNKSRSRSRSPDKSRSKSKDHAEDKLQ) the composition is skewed to basic and acidic residues. S289, S291, and S293 each carry phosphoserine. The segment covering 293 to 332 (SRHDSKSRSRSQERRAEEERRRSVSRARSQEKSRSQEKSL) has biased composition (basic and acidic residues). Positions 333–356 (LKSRSRSRSRSRSRSKDKRKGRKR) are enriched in basic residues. 2 stretches are compositionally biased toward basic and acidic residues: residues 357 to 370 (SRDESRSRSRSKSE) and 394 to 426 (KDTDHSRSPSRSVSKEREHAKAESGQRGSRAEG). A phosphoserine mark is found at S441, S453, and S455. Basic residues-rich tracts occupy residues 456–469 (RSKSASKTRSRSKS) and 479–489 (SRSRSRSHSRS).

It belongs to the splicing factor SR family. In terms of assembly, found in a pre-mRNA splicing complex with SRSF4/SFRS4, SRSF5/SFRS5, SNRNP70, SNRPA1, SRRM1 and SRRM2. Interacts with PNN. Extensively phosphorylated on serine residues in the RS domain.

It is found in the nucleus speckle. Its function is as follows. Plays a role in alternative splice site selection during pre-mRNA splicing. Represses the splicing of MAPT/Tau exon 10. In Mus musculus (Mouse), this protein is Serine/arginine-rich splicing factor 4 (Srsf4).